A 33-amino-acid polypeptide reads, in one-letter code: Beta/kappa-theraphotoxin-Hlv1a (33 aa).

Disulfide bonds link Cys2–Cys17, Cys9–Cys22, and Cys16–Cys29. At Ile33 the chain carries Isoleucine amide.

This sequence belongs to the neurotoxin 10 (Hwtx-1) family. 11 (haplotoxin-2) subfamily. As to expression, expressed by the venom gland.

The protein localises to the secreted. Its function is as follows. Spider venom neurotoxin that blocks voltage-gated sodium channel Nav1.3/SCN3A in human (IC(50)=80 nM) and rat (IC(50)=160 nM). Partially inhibits human Kv11.1/KCNH2/ERG (25% at 175 uM). In Cyriopagopus lividus (Cobalt blue tarantula), this protein is Beta/kappa-theraphotoxin-Hlv1a.